The primary structure comprises 91 residues: DNA-directed RNA polymerase subunit omega (91 aa).

This sequence belongs to the RNA polymerase subunit omega family. In terms of assembly, the RNAP catalytic core consists of 2 alpha, 1 beta, 1 beta' and 1 omega subunit. When a sigma factor is associated with the core the holoenzyme is formed, which can initiate transcription.

The enzyme catalyses RNA(n) + a ribonucleoside 5'-triphosphate = RNA(n+1) + diphosphate. Promotes RNA polymerase assembly. Latches the N- and C-terminal regions of the beta' subunit thereby facilitating its interaction with the beta and alpha subunits. This Pectobacterium atrosepticum (strain SCRI 1043 / ATCC BAA-672) (Erwinia carotovora subsp. atroseptica) protein is DNA-directed RNA polymerase subunit omega.